The chain runs to 263 residues: Energy-coupling factor transporter transmembrane protein EcfT (263 aa).

The next 4 membrane-spanning stretches (helical) occupy residues 22–42 (IIFA…ATNI), 69–89 (ILFL…EGAV), 105–125 (LAII…LVTL), and 243–263 (TGLI…RGGF).

It belongs to the energy-coupling factor EcfT family. As to quaternary structure, forms a stable energy-coupling factor (ECF) transporter complex composed of 2 membrane-embedded substrate-binding proteins (S component), 2 ATP-binding proteins (A component) and 2 transmembrane proteins (T component). May be able to interact with more than 1 S component at a time.

The protein localises to the cell membrane. Its function is as follows. Transmembrane (T) component of an energy-coupling factor (ECF) ABC-transporter complex. Unlike classic ABC transporters this ECF transporter provides the energy necessary to transport a number of different substrates. This is Energy-coupling factor transporter transmembrane protein EcfT from Exiguobacterium sibiricum (strain DSM 17290 / CCUG 55495 / CIP 109462 / JCM 13490 / 255-15).